Reading from the N-terminus, the 383-residue chain is Acetylornithine deacetylase (383 aa).

His-80 contacts Zn(2+). The active site involves Asp-82. Asp-112 is a Zn(2+) binding site. Glu-144 is an active-site residue. Residues Glu-145, Glu-169, and His-355 each contribute to the Zn(2+) site.

This sequence belongs to the peptidase M20A family. ArgE subfamily. Homodimer. It depends on Zn(2+) as a cofactor. Co(2+) is required as a cofactor. Requires glutathione as cofactor.

The protein resides in the cytoplasm. It catalyses the reaction N(2)-acetyl-L-ornithine + H2O = L-ornithine + acetate. Its pathway is amino-acid biosynthesis; L-arginine biosynthesis; L-ornithine from N(2)-acetyl-L-ornithine (linear): step 1/1. In terms of biological role, catalyzes the hydrolysis of the amide bond of N(2)-acetylated L-amino acids. Cleaves the acetyl group from N-acetyl-L-ornithine to form L-ornithine, an intermediate in L-arginine biosynthesis pathway, and a branchpoint in the synthesis of polyamines. This is Acetylornithine deacetylase from Edwardsiella ictaluri (strain 93-146).